A 172-amino-acid polypeptide reads, in one-letter code: Zinc finger protein 580 (172 aa).

The segment at 1 to 93 is disordered; it reads MLLLPPRPPH…GEPGPRKGYS (93 aa). The segment covering 19-30 has biased composition (pro residues); sequence MDPPPPKAPPFP. A Glycyl lysine isopeptide (Lys-Gly) (interchain with G-Cter in SUMO2) cross-link involves residue Lys-31. Low complexity predominate over residues 31 to 44; that stretch reads KAEGPSSTPSSAAG. Positions 75–86 are enriched in pro residues; the sequence is GPPQREAPPGEP. The C2H2-type 1 zinc-finger motif lies at 92-114; it reads YSCPECARVFASPLRLQSHRVSH. Lys-118 is covalently cross-linked (Glycyl lysine isopeptide (Lys-Gly) (interchain with G-Cter in SUMO2)). C2H2-type zinc fingers lie at residues 120 to 142 and 150 to 172; these read FTCGACGKAFKRSSHLSRHRATH and HTCPLCPRRFQDAAELAQHVRLH.

As to quaternary structure, interacts with SMAD2. In terms of tissue distribution, expressed in endothelial cells.

It localises to the nucleus. In terms of biological role, involved in the regulation of endothelial cell proliferation and migration. Mediates H(2)O(2)-induced leukocyte chemotaxis by elevating interleukin-8 production and may play a role in inflammation. May be involved in transcriptional regulation. This chain is Zinc finger protein 580 (ZNF580), found in Homo sapiens (Human).